Reading from the N-terminus, the 300-residue chain is ETS homologous factor (300 aa).

One can recognise a PNT domain in the interval 29 to 115 (PTCNVSSGFF…SNLQHLKWNG (87 aa)). The disordered stretch occupies residues 181 to 203 (VAESPDMKKEQDHPVKSHTKKHN). A compositionally biased stretch (basic and acidic residues) spans 185–195 (PDMKKEQDHPV). Residues 207-289 (THLWEFIRDI…DGRRLVYKFG (83 aa)) constitute a DNA-binding region (ETS).

The protein belongs to the ETS family. In terms of tissue distribution, highly expressed in kidney and lung, weakly in skeletal muscle, heart, and liver, and not detected in brain, spleen or testis.

The protein resides in the nucleus. Transcriptional activator that may play a role in regulating epithelial cell differentiation and proliferation. May act as a repressor for a specific subset of ETS/AP-1-responsive genes, and as a modulator of the nuclear response to mitogen-activated protein kinase signaling cascades. Binds to DNA sequences containing the consensus nucleotide core sequence GGAA. Involved in regulation of TNFRSF10B/DR5 expression through Ets-binding sequences on the TNFRSF10B/DR5 promoter. This is ETS homologous factor from Mus musculus (Mouse).